We begin with the raw amino-acid sequence, 79 residues long: Acyl carrier protein (79 aa).

Positions 2–77 (SDTAERVKKI…DAIDFINQKT (76 aa)) constitute a Carrier domain. Serine 37 carries the O-(pantetheine 4'-phosphoryl)serine modification.

The protein belongs to the acyl carrier protein (ACP) family. 4'-phosphopantetheine is transferred from CoA to a specific serine of apo-ACP by AcpS. This modification is essential for activity because fatty acids are bound in thioester linkage to the sulfhydryl of the prosthetic group.

It is found in the cytoplasm. Its pathway is lipid metabolism; fatty acid biosynthesis. Carrier of the growing fatty acid chain in fatty acid biosynthesis. In Rhodospirillum centenum (strain ATCC 51521 / SW), this protein is Acyl carrier protein.